Consider the following 313-residue polypeptide: Ketimine reductase mu-crystallin (313 aa).

Residue Arg-47 participates in 3,3',5-triiodo-L-thyronine binding. Residues Ser-90, His-91, Arg-118, Ala-143, Val-145, Gln-146, Asn-167, Arg-168, Thr-169, Asn-172, Thr-204, Met-205, and Val-225 each contribute to the NADPH site. 3,3',5-triiodo-L-thyronine is bound at residue Glu-256. Ser-291 contacts NADPH.

This sequence belongs to the ornithine cyclodeaminase/mu-crystallin family. Homodimer. Binds the thyroid hormone triiodothyronine (T3); T3 binding inhibits enzymatic activity.

The protein resides in the cytoplasm. The catalysed reaction is L-pipecolate + NADP(+) = Delta(1)-piperideine-2-carboxylate + NADPH + H(+). It carries out the reaction L-pipecolate + NAD(+) = Delta(1)-piperideine-2-carboxylate + NADH + H(+). It catalyses the reaction L-proline + NADP(+) = 1-pyrroline-2-carboxylate + NADPH + H(+). The enzyme catalyses L-proline + NAD(+) = 1-pyrroline-2-carboxylate + NADH + H(+). The catalysed reaction is (3R)-1,4-thiomorpholine-3-carboxylate + NAD(+) = 3,4-dehydrothiomorpholine-3-carboxylate + NADH + 2 H(+). It carries out the reaction (3R)-1,4-thiomorpholine-3-carboxylate + NADP(+) = 3,4-dehydrothiomorpholine-3-carboxylate + NADPH + 2 H(+). It catalyses the reaction (S)-cystathionine ketimine + NADH + 2 H(+) = (3R,5S)-2,3,5,6,7-pentahydro-1,4-thiazepine-3,5-dicarboxylate + NAD(+). The enzyme catalyses (S)-cystathionine ketimine + NADPH + 2 H(+) = (3R,5S)-2,3,5,6,7-pentahydro-1,4-thiazepine-3,5-dicarboxylate + NADP(+). The catalysed reaction is (R)-lanthionine ketimine + NADPH + 2 H(+) = (3R,5R)-1,4-thiomorpholine-3,5-dicarboxylate + NADP(+). It carries out the reaction Delta(2)-thiazoline-2-carboxylate + NADPH + 2 H(+) = L-thiazolidine-2-carboxylate + NADP(+). Functionally, catalyzes the NAD(P)H-dependent reduction of imine double bonds of a number of cyclic ketimine substrates, including sulfur-containing cyclic ketimines. Under physiological conditions, it efficiently catalyzes delta(1)-piperideine-2-carboxylate (P2C) and delta(1)-pyrroline-2-carboxylate (Pyr2C) reduction, suggesting a central role in lysine and glutamate metabolism. Additional substrates are delta(2)-thiazoline-2-carboxylate (T2C), 3,4-dehydrothiomorpholine-3-carboxylate (AECK), and (R)-lanthionine ketimine (LK) that is reduced at very low rate compared to other substrates. Also catalyzes the NAD(P)H-dependent reduction of (S)-cystathionine ketimine (CysK). This chain is Ketimine reductase mu-crystallin, found in Rattus norvegicus (Rat).